We begin with the raw amino-acid sequence, 545 residues long: Chaperonin GroEL (545 aa).

ATP-binding positions include 29–32 (TLGP), Lys50, 86–90 (DGTTT), Gly415, and Asp495.

The protein belongs to the chaperonin (HSP60) family. In terms of assembly, forms a cylinder of 14 subunits composed of two heptameric rings stacked back-to-back. Interacts with the co-chaperonin GroES.

The protein resides in the cytoplasm. The catalysed reaction is ATP + H2O + a folded polypeptide = ADP + phosphate + an unfolded polypeptide.. In terms of biological role, together with its co-chaperonin GroES, plays an essential role in assisting protein folding. The GroEL-GroES system forms a nano-cage that allows encapsulation of the non-native substrate proteins and provides a physical environment optimized to promote and accelerate protein folding. The protein is Chaperonin GroEL of Bacteroides thetaiotaomicron (strain ATCC 29148 / DSM 2079 / JCM 5827 / CCUG 10774 / NCTC 10582 / VPI-5482 / E50).